A 304-amino-acid chain; its full sequence is E3 ubiquitin-protein ligase RNF144B (304 aa).

Positions 27–245 (PLVTCKLCLC…YDRGPCRNKL (219 aa)) are TRIAD supradomain. Positions 31, 34, 54, 57, 122, 127, 146, 149, 154, 157, 162, 167, 194, and 197 each coordinate Zn(2+). The segment at 31 to 81 (CKLCLCEQSLDKMTTLQECRCIFCTACLKQYMQLAIREGCGSPITCPDMVC) adopts an RING-type 1 zinc-finger fold. The IBR-type zinc-finger motif lies at 102-167 (QLYQRLKFER…KDAWHAEVSC (66 aa)). Residues 194-223 (CPVCRVYIERNEGCAQMMCKNCKHTFCWYC) form an RING-type 2; atypical zinc finger. Residue Cys-207 is part of the active site. Zn(2+) is bound by residues Cys-212, Cys-215, Cys-220, Cys-223, His-235, and Cys-241. A helical transmembrane segment spans residues 259–279 (VVGILVGLGIIALVTSPLLLL).

Belongs to the RBR family. RNF144 subfamily. In terms of assembly, interacts with UBE2L3, UBE2L6 and LCMT2, as well as with BAX. Interacts with TBK1; this interaction inhibits TBK1 phosphorylation and 'Lys-63'-linked polyubiquitination. In terms of processing, auto-ubiquitinated.

Its subcellular location is the mitochondrion membrane. The protein resides in the cytoplasm. The catalysed reaction is [E2 ubiquitin-conjugating enzyme]-S-ubiquitinyl-L-cysteine + [acceptor protein]-L-lysine = [E2 ubiquitin-conjugating enzyme]-L-cysteine + [acceptor protein]-N(6)-ubiquitinyl-L-lysine.. Its pathway is protein modification; protein ubiquitination. Its function is as follows. E3 ubiquitin-protein ligase which accepts ubiquitin from E2 ubiquitin-conjugating enzymes UBE2L3 and UBE2L6 in the form of a thioester and then directly transfers the ubiquitin to targeted substrates such as LCMT2, thereby promoting their degradation. Induces apoptosis via a p53/TP53-dependent but caspase-independent mechanism. Plays a crucial role in maintaining the genomic stability by controlling the degradation of multiple proteins involved in mitotic progression and DNA damage. Regulates epithelial homeostasis by mediating degradation of CDKN1A and isoform 2 of TP63. Plays a regulatory role in innate immunity by negatively regulating IRF3 activation and IFN-beta production. Mechanistically, inhibits TBK1 phosphorylation and 'Lys-63'-linked polyubiquitination independently of its E3 ligase activity. Alternatively, promotes 'Lys-27' and 'Lys-33'-linked ubiquitination of IFIH1/MDA5, promoting selective autophagic degradation of IFIH1/MDA5 to inhibit antiviral response. The chain is E3 ubiquitin-protein ligase RNF144B (RNF144B) from Bos taurus (Bovine).